A 310-amino-acid chain; its full sequence is MSSKLLTIQLLEELVHAAELNQEGKTADYIPELANVNQELTAIAVQPLGEKTLAYSNNPLHPVTLQSTGKMIPLIGLLEEFGADQLFEWVKVEPSGDDFASITRLEQFGPKPSNPMLNAGAIALCSRIPGVGEQQFRWLEHWVQKLFNQRLSINPLVFASEKRTGNRNRALAYLLKSRNNLGADVHETLDLYFALCSYEAMLDQMLYLPAVLANRGQDPDTGEQILSIETCKITLAIMATCGLYDETGTHMVKTGMPAKSGVSGYTIAVVPGKAGIVVLSPRVNAKGNSIRGEIMLEGLSKAMGWHFALP.

Substrate-binding residues include S67, N118, E161, N168, Y192, Y244, and V262.

Belongs to the glutaminase family. In terms of assembly, homotetramer.

It carries out the reaction L-glutamine + H2O = L-glutamate + NH4(+). The sequence is that of Glutaminase from Legionella pneumophila (strain Corby).